The following is a 321-amino-acid chain: Glycerol-3-phosphate phosphatase (321 aa).

Residue D34 is the Nucleophile of the active site. Positions 34, 36, and 260 each coordinate Mg(2+). The active-site Proton donor is D36.

This sequence belongs to the HAD-like hydrolase superfamily. CbbY/CbbZ/Gph/YieH family. Homodimer. Mg(2+) serves as cofactor. In terms of tissue distribution, ubiquitously expressed with higher expression in testis, heart, skeletal muscle and islet tissue (at protein level).

It catalyses the reaction O-phospho-L-tyrosyl-[protein] + H2O = L-tyrosyl-[protein] + phosphate. The enzyme catalyses sn-glycerol 1-phosphate + H2O = glycerol + phosphate. The catalysed reaction is sn-glycerol 3-phosphate + H2O = glycerol + phosphate. Inhibited by orthovanadate, beryllium trifluoride, Ca(2+) and EDTA. Glycerol-3-phosphate phosphatase hydrolyzing glycerol-3-phosphate into glycerol. Thereby, regulates the cellular levels of glycerol-3-phosphate a metabolic intermediate of glucose, lipid and energy metabolism. Was also shown to have a 2-phosphoglycolate phosphatase activity and a tyrosine-protein phosphatase activity. However, their physiological relevance is unclear. In vitro, also has a phosphatase activity toward ADP, ATP, GDP and GTP. The chain is Glycerol-3-phosphate phosphatase from Mus musculus (Mouse).